A 258-amino-acid chain; its full sequence is Acetylglutamate kinase (258 aa).

Substrate-binding positions include 44–45 (GG), R66, and N158. ATP is bound by residues 181-186 (DVSGIL) and 209-211 (IIT).

It belongs to the acetylglutamate kinase family. ArgB subfamily. In terms of assembly, homodimer.

It is found in the cytoplasm. It carries out the reaction N-acetyl-L-glutamate + ATP = N-acetyl-L-glutamyl 5-phosphate + ADP. The protein operates within amino-acid biosynthesis; L-arginine biosynthesis; N(2)-acetyl-L-ornithine from L-glutamate: step 2/4. Functionally, catalyzes the ATP-dependent phosphorylation of N-acetyl-L-glutamate. This Shigella sonnei (strain Ss046) protein is Acetylglutamate kinase.